Reading from the N-terminus, the 180-residue chain is Shikimate kinase (180 aa).

Residue 14–19 (GAGKST) participates in ATP binding. S18 is a binding site for Mg(2+). The substrate site is built by D36, R60, and G82. R120 is an ATP binding site. Position 140 (R140) interacts with substrate. Position 157 (Q157) interacts with ATP.

Belongs to the shikimate kinase family. In terms of assembly, monomer. Mg(2+) serves as cofactor.

It is found in the cytoplasm. It carries out the reaction shikimate + ATP = 3-phosphoshikimate + ADP + H(+). The protein operates within metabolic intermediate biosynthesis; chorismate biosynthesis; chorismate from D-erythrose 4-phosphate and phosphoenolpyruvate: step 5/7. Functionally, catalyzes the specific phosphorylation of the 3-hydroxyl group of shikimic acid using ATP as a cosubstrate. This is Shikimate kinase from Haemophilus influenzae (strain PittGG).